Consider the following 381-residue polypeptide: Cobalt-precorrin-5B C(1)-methyltransferase (381 aa).

It belongs to the CbiD family.

It catalyses the reaction Co-precorrin-5B + S-adenosyl-L-methionine = Co-precorrin-6A + S-adenosyl-L-homocysteine. It participates in cofactor biosynthesis; adenosylcobalamin biosynthesis; cob(II)yrinate a,c-diamide from sirohydrochlorin (anaerobic route): step 6/10. Its function is as follows. Catalyzes the methylation of C-1 in cobalt-precorrin-5B to form cobalt-precorrin-6A. The chain is Cobalt-precorrin-5B C(1)-methyltransferase from Clostridium botulinum (strain Eklund 17B / Type B).